The primary structure comprises 727 residues: Fatty acid oxidation complex subunit alpha (727 aa).

An enoyl-CoA hydratase region spans residues 16-205; the sequence is NQTASVFSFD…RLGLVDDAVP (190 aa). The tract at residues 321-727 is 3-hydroxyacyl-CoA dehydrogenase; sequence AKIKHVGILG…MAEQNKSFYP (407 aa).

The protein in the N-terminal section; belongs to the enoyl-CoA hydratase/isomerase family. This sequence in the central section; belongs to the 3-hydroxyacyl-CoA dehydrogenase family. In terms of assembly, heterotetramer of two alpha chains (FadJ) and two beta chains (FadI).

It is found in the cytoplasm. It catalyses the reaction a (3S)-3-hydroxyacyl-CoA = a (2E)-enoyl-CoA + H2O. The catalysed reaction is a 4-saturated-(3S)-3-hydroxyacyl-CoA = a (3E)-enoyl-CoA + H2O. The enzyme catalyses a (3S)-3-hydroxyacyl-CoA + NAD(+) = a 3-oxoacyl-CoA + NADH + H(+). It carries out the reaction (3S)-3-hydroxybutanoyl-CoA = (3R)-3-hydroxybutanoyl-CoA. It functions in the pathway lipid metabolism; fatty acid beta-oxidation. Its function is as follows. Catalyzes the formation of a hydroxyacyl-CoA by addition of water on enoyl-CoA. Also exhibits 3-hydroxyacyl-CoA epimerase and 3-hydroxyacyl-CoA dehydrogenase activities. The polypeptide is Fatty acid oxidation complex subunit alpha (Photorhabdus laumondii subsp. laumondii (strain DSM 15139 / CIP 105565 / TT01) (Photorhabdus luminescens subsp. laumondii)).